A 25-amino-acid polypeptide reads, in one-letter code: Caerin-1.7 (25 aa).

A Leucine amide modification is found at L25.

Belongs to the frog skin active peptide (FSAP) family. Caerin subfamily. Caerin-1.7.1 does not have any antibacterial activity. As to expression, expressed by the skin dorsal glands.

The protein resides in the secreted. Its function is as follows. Antibacterial peptide, that adopts an alpha helical conformation which can disrupt bacterial membranes. Each caerin displays a different antimicrobial specificity. In Ranoidea xanthomera (Northern orange-eyed tree frog), this protein is Caerin-1.7.